Consider the following 314-residue polypeptide: tRNA-cytidine(32) 2-sulfurtransferase (314 aa).

The PP-loop motif signature appears at 49 to 54 (SGGKDS). Residues Cys124, Cys127, and Cys215 each coordinate [4Fe-4S] cluster.

It belongs to the TtcA family. As to quaternary structure, homodimer. Requires Mg(2+) as cofactor. [4Fe-4S] cluster is required as a cofactor.

It localises to the cytoplasm. The enzyme catalyses cytidine(32) in tRNA + S-sulfanyl-L-cysteinyl-[cysteine desulfurase] + AH2 + ATP = 2-thiocytidine(32) in tRNA + L-cysteinyl-[cysteine desulfurase] + A + AMP + diphosphate + H(+). It participates in tRNA modification. Catalyzes the ATP-dependent 2-thiolation of cytidine in position 32 of tRNA, to form 2-thiocytidine (s(2)C32). The sulfur atoms are provided by the cysteine/cysteine desulfurase (IscS) system. This Histophilus somni (strain 129Pt) (Haemophilus somnus) protein is tRNA-cytidine(32) 2-sulfurtransferase.